A 305-amino-acid polypeptide reads, in one-letter code: Fatty acid elongase 1 (305 aa).

A run of 7 helical transmembrane segments spans residues 24–44, 80–100, 129–149, 158–178, 183–203, 217–237, and 257–277; these read MIAN…FVFI, VVWN…VTPV, FWMG…IFLV, FLHW…YCVG, IWVA…FALA, YITI…IFAL, and IQLV…VASY. A HxxHH motif motif is present at residues 160–164; sequence HWYHH. H163 serves as the catalytic Nucleophile. The disordered stretch occupies residues 284-305; it reads PTVGGPSSTAGVSNGSVEKKVK. Residues 288–299 show a composition bias toward polar residues; the sequence is GPSSTAGVSNGS. N297 is a glycosylation site (N-linked (GlcNAc...) asparagine).

The protein belongs to the ELO family.

The protein resides in the endoplasmic reticulum membrane. The enzyme catalyses an acyl-CoA + malonyl-CoA + H(+) = a 3-oxoacyl-CoA + CO2 + CoA. It participates in lipid metabolism; fatty acid biosynthesis. Functionally, involved in the synthesis of fatty acids. Elongates C4 fatty acids to C10. This chain is Fatty acid elongase 1, found in Trypanosoma brucei brucei (strain 927/4 GUTat10.1).